The sequence spans 507 residues: Probable cytochrome P450 6a18 (507 aa).

Position 451 (C451) interacts with heme.

It belongs to the cytochrome P450 family. Requires heme as cofactor.

The protein localises to the endoplasmic reticulum membrane. Its subcellular location is the microsome membrane. May be involved in the metabolism of insect hormones and in the breakdown of synthetic insecticides. This is Probable cytochrome P450 6a18 (Cyp6a18) from Drosophila melanogaster (Fruit fly).